A 490-amino-acid chain; its full sequence is ATP synthase subunit beta, plastid (490 aa).

Residue 170–177 coordinates ATP; sequence GGAGVGKT.

Belongs to the ATPase alpha/beta chains family. In terms of assembly, F-type ATPases have 2 components, CF(1) - the catalytic core - and CF(0) - the membrane proton channel. CF(1) has five subunits: alpha(3), beta(3), gamma(1), delta(1), epsilon(1). CF(0) has four main subunits: a(1), b(1), b'(1) and c(9-12).

Its subcellular location is the plastid membrane. The enzyme catalyses ATP + H2O + 4 H(+)(in) = ADP + phosphate + 5 H(+)(out). Its function is as follows. Produces ATP from ADP in the presence of a proton gradient across the membrane. The catalytic sites are hosted primarily by the beta subunits. The sequence is that of ATP synthase subunit beta, plastid (atpB) from Cuscuta japonica (Japanese dodder).